A 338-amino-acid chain; its full sequence is Tryptophan--tRNA ligase (338 aa).

Residues 11–13 (QPS) and 19–20 (GN) contribute to the ATP site. The 'HIGH' region signature appears at 12–20 (PSGELSIGN). An L-tryptophan-binding site is contributed by D135. ATP is bound by residues 147–149 (GSD), V189, and 198–202 (KMSKS). The 'KMSKS' region signature appears at 198–202 (KMSKS).

Belongs to the class-I aminoacyl-tRNA synthetase family. As to quaternary structure, homodimer.

It localises to the cytoplasm. The enzyme catalyses tRNA(Trp) + L-tryptophan + ATP = L-tryptophyl-tRNA(Trp) + AMP + diphosphate + H(+). Functionally, catalyzes the attachment of tryptophan to tRNA(Trp). The sequence is that of Tryptophan--tRNA ligase from Vibrio parahaemolyticus serotype O3:K6 (strain RIMD 2210633).